The chain runs to 178 residues: Fatty-acid and retinol-binding protein 1 (178 aa).

A signal peptide spans methionine 1–alanine 16. Residues asparagine 44 and asparagine 75 are each glycosylated (N-linked (GlcNAc...) asparagine). Coiled-coil stretches lie at residues aspartate 67–asparagine 89 and lysine 123–alanine 153. Asparagine 157 is a glycosylation site (N-linked (GlcNAc...) asparagine).

Belongs to the fatty-acid and retinol-binding protein (FARBP) family. N-glycosylated.

Its subcellular location is the secreted. In terms of biological role, binds retinol and different fatty acids. This Acanthocheilonema viteae (Filarial nematode worm) protein is Fatty-acid and retinol-binding protein 1.